A 150-amino-acid chain; its full sequence is Ribonuclease H (150 aa).

The RNase H type-1 domain occupies 1-141 (MKSIEVHTDG…VDVLARNQAI (141 aa)). Positions 9, 47, 69, and 133 each coordinate Mg(2+).

Belongs to the RNase H family. In terms of assembly, monomer. Requires Mg(2+) as cofactor.

The protein localises to the cytoplasm. It catalyses the reaction Endonucleolytic cleavage to 5'-phosphomonoester.. In terms of biological role, endonuclease that specifically degrades the RNA of RNA-DNA hybrids. The sequence is that of Ribonuclease H from Xanthomonas axonopodis pv. citri (strain 306).